We begin with the raw amino-acid sequence, 175 residues long: Anterior gradient protein 2 homolog (175 aa).

The first 20 residues, 1–20, serve as a signal peptide directing secretion; sequence MEKIPVSAFLLLVALSYTLA. The segment at 21–40 is required to promote cell adhesion; the sequence is RDTTVKPGAKKDTKDSRPKL. 2 short sequence motifs (homodimer stabilization; interchain) span residues 45-54 and 60-67; these read SRGWGDQLIW and EALYKSKT.

Belongs to the AGR family. Monomer and homodimer. Interacts with LYPD3 and DAG1 (alphaDAG1). Interacts with MUC2; disulfide-linked. Expressed strongly in trachea, lung, stomach, colon, prostate and small intestine. Expressed weakly in pituitary gland, salivary gland, mammary gland, bladder, appendix, ovary, fetal lung, uterus, pancreas, kidney, fetal kidney, testis, placenta, thyroid gland and in estrogen receptor (ER)-positive breast cancer cell lines.

It localises to the secreted. The protein localises to the endoplasmic reticulum. Its function is as follows. Required for MUC2 post-transcriptional synthesis and secretion. May play a role in the production of mucus by intestinal cells. Proto-oncogene that may play a role in cell migration, cell differentiation and cell growth. Promotes cell adhesion. In Homo sapiens (Human), this protein is Anterior gradient protein 2 homolog (AGR2).